A 404-amino-acid chain; its full sequence is Multidrug resistance protein MdtG (404 aa).

11 helical membrane passes run 19–39 (LGCF…PLYV), 56–76 (LVFS…GGLA), 90–110 (LGMA…QFLI), 113–133 (ALLG…ATQV), 144–164 (TLST…GLLA), 171–191 (PVFF…FFFI), 222–242 (LFVT…ILTL), 254–274 (IAFI…LSAP), 288–308 (ILIV…FVQT), 317–337 (FLLG…LVYN), and 376–396 (AVFC…WNSL).

This sequence belongs to the major facilitator superfamily. DHA1 family. MdtG (TC 2.A.1.2.20) subfamily.

It is found in the cell inner membrane. The chain is Multidrug resistance protein MdtG from Salmonella choleraesuis (strain SC-B67).